The following is a 207-amino-acid chain: Ribosomal RNA large subunit methyltransferase E (207 aa).

S-adenosyl-L-methionine contacts are provided by Gly-60, Trp-62, Asp-80, Asp-96, and Asp-121. Lys-161 (proton acceptor) is an active-site residue.

Belongs to the class I-like SAM-binding methyltransferase superfamily. RNA methyltransferase RlmE family.

Its subcellular location is the cytoplasm. The catalysed reaction is uridine(2552) in 23S rRNA + S-adenosyl-L-methionine = 2'-O-methyluridine(2552) in 23S rRNA + S-adenosyl-L-homocysteine + H(+). In terms of biological role, specifically methylates the uridine in position 2552 of 23S rRNA at the 2'-O position of the ribose in the fully assembled 50S ribosomal subunit. This Thioalkalivibrio sulfidiphilus (strain HL-EbGR7) protein is Ribosomal RNA large subunit methyltransferase E.